We begin with the raw amino-acid sequence, 777 residues long: Ribosome-releasing factor 2, mitochondrial (777 aa).

One can recognise a tr-type G domain in the interval 68-353 (AKIRNIGIMA…AVTMYLPSPE (286 aa)). Residues 77-84 (AHIDAGKT), 141-145 (DTPGH), and 195-198 (NKMD) contribute to the GTP site.

It belongs to the TRAFAC class translation factor GTPase superfamily. Classic translation factor GTPase family. EF-G/EF-2 subfamily.

The protein localises to the mitochondrion. It catalyses the reaction GTP + H2O = GDP + phosphate + H(+). Mitochondrial GTPase that mediates the disassembly of ribosomes from messenger RNA at the termination of mitochondrial protein biosynthesis. Acts in collaboration with MRRF. GTP hydrolysis follows the ribosome disassembly and probably occurs on the ribosome large subunit. Not involved in the GTP-dependent ribosomal translocation step during translation elongation. The polypeptide is Ribosome-releasing factor 2, mitochondrial (Pongo abelii (Sumatran orangutan)).